The chain runs to 189 residues: Large ribosomal subunit protein eL18 (189 aa).

Belongs to the eukaryotic ribosomal protein eL18 family.

It is found in the cytoplasm. This is Large ribosomal subunit protein eL18 (RpL18) from Aedes aegypti (Yellowfever mosquito).